A 78-amino-acid polypeptide reads, in one-letter code: Acyl carrier protein (78 aa).

The region spanning serine 2–serine 77 is the Carrier domain. At serine 37 the chain carries O-(pantetheine 4'-phosphoryl)serine.

It belongs to the acyl carrier protein (ACP) family. 4'-phosphopantetheine is transferred from CoA to a specific serine of apo-ACP by AcpS. This modification is essential for activity because fatty acids are bound in thioester linkage to the sulfhydryl of the prosthetic group.

The protein localises to the cytoplasm. It participates in lipid metabolism; fatty acid biosynthesis. Carrier of the growing fatty acid chain in fatty acid biosynthesis. The chain is Acyl carrier protein from Methylorubrum extorquens (strain CM4 / NCIMB 13688) (Methylobacterium extorquens).